Reading from the N-terminus, the 161-residue chain is Type IV major fimbrial protein FimA (161 aa).

Residues 1–7 constitute a propeptide, leader sequence; it reads MKSLQKG. Residue Phe8 is modified to N-methylphenylalanine. A helical transmembrane segment spans residues 8–28; sequence FTLIELMIVVAIIGILAAFAI. A disulfide bridge links Cys63 with Cys105.

Belongs to the N-Me-Phe pilin family. In terms of assembly, the pili are polar flexible filaments of about 5.4 nanometers diameter and 2.5 micrometers average length; they consist of only a single polypeptide chain arranged in a helical configuration of five subunits per turn in the assembled pilus.

It localises to the fimbrium. The protein resides in the membrane. In terms of biological role, major component of the type IV fimbriae that plays an essential role in twitching motility, natural transformation, and protease secretion. This is Type IV major fimbrial protein FimA (fimA) from Dichelobacter nodosus (Bacteroides nodosus).